Reading from the N-terminus, the 84-residue chain is MKFMVEVRIRLKKGMLNPEAATIERALALLGYEVEDTDTTDVITFTMDEDSLEAVEREVEDMCQRLLCNPVIHDYDVSINEMEG.

Belongs to the PurS family. Homodimer. Part of the FGAM synthase complex composed of 1 PurL, 1 PurQ and 2 PurS subunits.

It localises to the cytoplasm. The enzyme catalyses N(2)-formyl-N(1)-(5-phospho-beta-D-ribosyl)glycinamide + L-glutamine + ATP + H2O = 2-formamido-N(1)-(5-O-phospho-beta-D-ribosyl)acetamidine + L-glutamate + ADP + phosphate + H(+). Its pathway is purine metabolism; IMP biosynthesis via de novo pathway; 5-amino-1-(5-phospho-D-ribosyl)imidazole from N(2)-formyl-N(1)-(5-phospho-D-ribosyl)glycinamide: step 1/2. In terms of biological role, part of the phosphoribosylformylglycinamidine synthase complex involved in the purines biosynthetic pathway. Catalyzes the ATP-dependent conversion of formylglycinamide ribonucleotide (FGAR) and glutamine to yield formylglycinamidine ribonucleotide (FGAM) and glutamate. The FGAM synthase complex is composed of three subunits. PurQ produces an ammonia molecule by converting glutamine to glutamate. PurL transfers the ammonia molecule to FGAR to form FGAM in an ATP-dependent manner. PurS interacts with PurQ and PurL and is thought to assist in the transfer of the ammonia molecule from PurQ to PurL. This Methanothermobacter thermautotrophicus (strain ATCC 29096 / DSM 1053 / JCM 10044 / NBRC 100330 / Delta H) (Methanobacterium thermoautotrophicum) protein is Phosphoribosylformylglycinamidine synthase subunit PurS.